The sequence spans 64 residues: uncharacterized protein (64 aa).

A signal peptide spans 1-26; it reads MVVKENFCGACLTIPLAFAGAGTAIG. The helical transmembrane segment at 33 to 53 threads the bilayer; sequence IKKWSIVITIISLLLTVWFIY.

It belongs to the IIV-6 010R family.

The protein localises to the host membrane. This is an uncharacterized protein from Aedes vexans (Inland floodwater mosquito).